The following is a 366-amino-acid chain: Alanine racemase (366 aa).

Residue Lys33 is the Proton acceptor; specific for D-alanine of the active site. Residue Lys33 is modified to N6-(pyridoxal phosphate)lysine. Arg129 provides a ligand contact to substrate. The Proton acceptor; specific for L-alanine role is filled by Tyr253. Met301 contributes to the substrate binding site.

The protein belongs to the alanine racemase family. It depends on pyridoxal 5'-phosphate as a cofactor.

It catalyses the reaction L-alanine = D-alanine. The protein operates within amino-acid biosynthesis; D-alanine biosynthesis; D-alanine from L-alanine: step 1/1. In terms of biological role, catalyzes the interconversion of L-alanine and D-alanine. May also act on other amino acids. In Xanthomonas axonopodis pv. citri (strain 306), this protein is Alanine racemase (alr).